The following is a 140-amino-acid chain: 3-hydroxyacyl-[acyl-carrier-protein] dehydratase FabZ (140 aa).

His47 is an active-site residue.

It belongs to the thioester dehydratase family. FabZ subfamily.

It localises to the cytoplasm. The catalysed reaction is a (3R)-hydroxyacyl-[ACP] = a (2E)-enoyl-[ACP] + H2O. Involved in unsaturated fatty acids biosynthesis. Catalyzes the dehydration of short chain beta-hydroxyacyl-ACPs and long chain saturated and unsaturated beta-hydroxyacyl-ACPs. The protein is 3-hydroxyacyl-[acyl-carrier-protein] dehydratase FabZ of Streptococcus suis (strain 98HAH33).